The chain runs to 62 residues: Photosystem II reaction center protein Z (62 aa).

Transmembrane regions (helical) follow at residues 8–28 (TLFA…VVFA) and 41–61 (FSGI…NSFV).

Belongs to the PsbZ family. As to quaternary structure, PSII is composed of 1 copy each of membrane proteins PsbA, PsbB, PsbC, PsbD, PsbE, PsbF, PsbH, PsbI, PsbJ, PsbK, PsbL, PsbM, PsbT, PsbY, PsbZ, Psb30/Ycf12, at least 3 peripheral proteins of the oxygen-evolving complex and a large number of cofactors. It forms dimeric complexes.

The protein localises to the plastid. Its subcellular location is the chloroplast thylakoid membrane. May control the interaction of photosystem II (PSII) cores with the light-harvesting antenna, regulates electron flow through the 2 photosystem reaction centers. PSII is a light-driven water plastoquinone oxidoreductase, using light energy to abstract electrons from H(2)O, generating a proton gradient subsequently used for ATP formation. This chain is Photosystem II reaction center protein Z, found in Tupiella akineta (Green alga).